A 447-amino-acid chain; its full sequence is Monocarboxylate transporter 11 (447 aa).

Over 1-11 the chain is Cytoplasmic; it reads MTPKPAGPPDG. Helical transmembrane passes span 12–32, 54–74, 80–100, 107–127, 139–159, 162–182, 219–239, 249–269, 288–308, 330–350, 354–374, and 383–403; these read GWGW…YGLL, AWVS…GSAL, ARPV…FSAF, LYLG…APAL, VLAV…LAPA, FLLD…VTLH, AFSV…VPYV, GMGG…DACA, LVVF…VPTV, GSYA…GGVV, GLVM…SGFL, and ASFL…MGLP. Over 404-447 the chain is Cytoplasmic; the sequence is RALPSCRPASPPATPPPERGELLPVPQVSLLSAGGTGSIRDTTC.

Belongs to the major facilitator superfamily. Monocarboxylate porter (TC 2.A.1.13) family. Interacts with isoform 2 of BSG.

The protein localises to the endoplasmic reticulum membrane. It localises to the cell membrane. The enzyme catalyses pyruvate(out) + H(+)(out) = pyruvate(in) + H(+)(in). In terms of biological role, proton-linked monocarboxylate transporter. It catalyzes the transport of pyruvate across the plasma membrane. Probably involved in hepatic lipid metabolism: overexpression results in an increase of triacylglycerol(TAG) levels, small increases in intracellular diacylglycerols and decreases in lysophosphatidylcholine, cholesterol ester and sphingomyelin lipids. The protein is Monocarboxylate transporter 11 (Slc16a11) of Mus musculus (Mouse).